A 479-amino-acid polypeptide reads, in one-letter code: Lincomycin resistance protein LmrB (479 aa).

14 consecutive transmembrane segments (helical) span residues 19–41 (MISL…IALT), 56–78 (WLTT…LLQW), 85–107 (FTVS…SFSF), 112–134 (RIVQ…LVIF), 141–160 (AAMG…GPTF), 170–192 (WHWI…IAYM), 205–222 (VLSI…VFGF), 232–251 (WSSP…LILF), 272–294 (MFIL…MLLL), 304–326 (LTAF…MSPV), 338–355 (WLVI…WFFS), 360–382 (TSTA…MIMM), 403–425 (IMNT…IMAA), and 449–471 (AGVQ…GAFF).

Belongs to the major facilitator superfamily. EmrB family.

It is found in the cell membrane. Proton-dependent transporter. May mediate the efflux of lincomycin. This chain is Lincomycin resistance protein LmrB (lmrB), found in Bacillus subtilis (strain 168).